The chain runs to 507 residues: E3 SUMO-protein ligase PIAS4 (507 aa).

The residue at position 2 (A2) is an N-acetylalanine. A Glycyl lysine isopeptide (Lys-Gly) (interchain with G-Cter in SUMO2) cross-link involves residue K9. In terms of domain architecture, SAP spans 12-46 (VMSFRVSDLQMLLGFVGRSKSGLKHELVTRALQLV). An LXXLL motif motif is present at residues 20–24 (LQMLL). K35 participates in a covalent cross-link: Glycyl lysine isopeptide (Lys-Gly) (interchain with G-Cter in SUMO); alternate. K35 participates in a covalent cross-link: Glycyl lysine isopeptide (Lys-Gly) (interchain with G-Cter in SUMO2); alternate. Glycyl lysine isopeptide (Lys-Gly) (interchain with G-Cter in SUMO2) cross-links involve residues K56, K59, K68, and K69. At K107 the chain carries N6-acetyllysine. The PINIT domain occupies 112 to 272 (LGRLPTKTLK…SVALYLVRQL (161 aa)). K118 is covalently cross-linked (Glycyl lysine isopeptide (Lys-Gly) (interchain with G-Cter in SUMO2)). A Glycyl lysine isopeptide (Lys-Gly) (interchain with G-Cter in SUMO) cross-link involves residue K128. The SP-RING-type zinc finger occupies 304–385 (PDSEIATTGV…LSKILSECEG (82 aa)). Zn(2+)-binding residues include C335, H337, C358, and C361. Residues 426 to 507 (APASSTPGIG…PFQKGLVPAC (82 aa)) are disordered. The span at 434–450 (IGSGLSGPGSAGSGAGA) shows a compositional bias: gly residues. The segment covering 474-489 (SEDEDEDEDDDEDEDE) has biased composition (acidic residues).

It belongs to the PIAS family. As to quaternary structure, interacts with AR, GATA2, LEF1, TP53 and STAT1 (IFNG-induced). Interacts with TICAM1. Interacts with MTA1. Interacts with PRDM1/Blimp-1. Interacts with TRIM32 upon treatment with UVB and TNF-alpha. In terms of assembly, (Microbial infection) Interacts ewith Moloney murine leukemia virus Capsid protein p30. Post-translationally, sumoylated. Lys-35 is the main site of sumoylation. Sumoylation is required for TCF4 sumoylation and transcriptional activation. Represses LEF1 transcriptional activity. SUMO1 is the preferred conjugate. Ubiquitinated by TRIM32 upon treatment with UVB and TNF-alpha. Widely expressed, with highest levels in testis. Also expressed in vascular endothelial cells, in primary keratinocytes and in the CNS, including cortex, olfactory bulb, spinal cord, thalamus and trigeminal ganglion. Low expression, if any, in liver and lung.

The protein localises to the nucleus. Its subcellular location is the PML body. The enzyme catalyses S-ubiquitinyl-[E2 ubiquitin-conjugating enzyme]-L-cysteine + [acceptor protein]-L-lysine = [E2 ubiquitin-conjugating enzyme]-L-cysteine + N(6)-ubiquitinyl-[acceptor protein]-L-lysine.. It functions in the pathway protein modification; protein sumoylation. Its function is as follows. Functions as an E3-type small ubiquitin-like modifier (SUMO) ligase, stabilizing the interaction between UBE2I and the substrate, and as a SUMO-tethering factor. Mediates sumoylation of ALKBH5, AXIN1, CEBPA, KLF8, GATA2, PARK7, HERC2, MYB, TCF4 and RNF168. Plays a crucial role as a transcriptional coregulation in various cellular pathways, including the STAT pathway, the p53/TP53 pathway, the Wnt pathway and the steroid hormone signaling pathway. Involved in gene silencing. In Wnt signaling, represses LEF1 and enhances TCF4 transcriptional activities through promoting their sumoylations. Enhances the sumoylation of MTA1 and may participate in its paralog-selective sumoylation. Binds to AT-rich DNA sequences, known as matrix or scaffold attachment regions (MARs/SARs). Catalyzes conjugation of SUMO2 to KAT5 in response to DNA damage, facilitating repair of DNA double-strand breaks (DSBs) via homologous recombination (HR). Mediates sumoylation of PARP1 in response to PARP1 trapping to chromatin. Mediates sumoylation of KLF8, repressiing KLF8 transcriptional activity and cell cycle progression into G(1) phase. Sumoylates ALKBH5 downstream of MAPK8/JNK1 and MAPK9/JNK2 in response to reactive oxygen species (ROS), inhibiting ALKBH5 RNA demethylase activity. The sequence is that of E3 SUMO-protein ligase PIAS4 (Pias4) from Mus musculus (Mouse).